We begin with the raw amino-acid sequence, 137 residues long: Small ribosomal subunit protein eS19 (137 aa).

It belongs to the eukaryotic ribosomal protein eS19 family. Component of the small ribosomal subunit.

It localises to the cytoplasm. The polypeptide is Small ribosomal subunit protein eS19 (RPS19) (Encephalitozoon cuniculi (strain GB-M1) (Microsporidian parasite)).